The following is a 429-amino-acid chain: 3-phosphoshikimate 1-carboxyvinyltransferase (429 aa).

3 residues coordinate 3-phosphoshikimate: lysine 22, serine 23, and arginine 27. Residue lysine 22 coordinates phosphoenolpyruvate. Phosphoenolpyruvate contacts are provided by glycine 94 and arginine 122. 3-phosphoshikimate contacts are provided by serine 167, glutamine 169, aspartate 315, and lysine 342. Position 169 (glutamine 169) interacts with phosphoenolpyruvate. The Proton acceptor role is filled by aspartate 315. The phosphoenolpyruvate site is built by arginine 346 and arginine 388.

Belongs to the EPSP synthase family. Monomer.

It localises to the cytoplasm. It carries out the reaction 3-phosphoshikimate + phosphoenolpyruvate = 5-O-(1-carboxyvinyl)-3-phosphoshikimate + phosphate. The protein operates within metabolic intermediate biosynthesis; chorismate biosynthesis; chorismate from D-erythrose 4-phosphate and phosphoenolpyruvate: step 6/7. Its function is as follows. Catalyzes the transfer of the enolpyruvyl moiety of phosphoenolpyruvate (PEP) to the 5-hydroxyl of shikimate-3-phosphate (S3P) to produce enolpyruvyl shikimate-3-phosphate and inorganic phosphate. The chain is 3-phosphoshikimate 1-carboxyvinyltransferase from Citrifermentans bemidjiense (strain ATCC BAA-1014 / DSM 16622 / JCM 12645 / Bem) (Geobacter bemidjiensis).